The chain runs to 184 residues: MKNVTDSFVSLGRWPSAGSFGLNTDILATNPINLSVVLGVLIFFGKGVLNDLLDNRKQRILNTIRNSEELRGGAIEQLEKARARLRKVKTEAARFRVNQYSEAEREKLNLINLTYKSLEDFENYKNDSIRFEQQRAIHQVRQRVFQQALRGALETLNSCLNKELHLRTISANIRLFRSMKELTN.

Residues 27–49 (LATNPINLSVVLGVLIFFGKGVL) form a helical membrane-spanning segment.

Belongs to the ATPase B chain family. F-type ATPases have 2 components, F(1) - the catalytic core - and F(0) - the membrane proton channel. F(1) has five subunits: alpha(3), beta(3), gamma(1), delta(1), epsilon(1). F(0) has four main subunits: a(1), b(1), b'(1) and c(10-14). The alpha and beta chains form an alternating ring which encloses part of the gamma chain. F(1) is attached to F(0) by a central stalk formed by the gamma and epsilon chains, while a peripheral stalk is formed by the delta, b and b' chains.

It localises to the plastid. Its subcellular location is the chloroplast thylakoid membrane. Its function is as follows. F(1)F(0) ATP synthase produces ATP from ADP in the presence of a proton or sodium gradient. F-type ATPases consist of two structural domains, F(1) containing the extramembraneous catalytic core and F(0) containing the membrane proton channel, linked together by a central stalk and a peripheral stalk. During catalysis, ATP synthesis in the catalytic domain of F(1) is coupled via a rotary mechanism of the central stalk subunits to proton translocation. Component of the F(0) channel, it forms part of the peripheral stalk, linking F(1) to F(0). In Pelargonium hortorum (Common geranium), this protein is ATP synthase subunit b, chloroplastic.